The chain runs to 305 residues: MSKKLTFQEIILTLQQYWNDQGCMLMQAYDNEKGAGTMSPYTFLRAIGPEPWNAAYVEPSRRPADGRYGENPNRLYQHHQFQVVMKPSPSNIQELYLASLEKLGINPLEHDIRFVEDNWENPSTGSAGLGWEVWLDGMEITQFTYFQQVGGLATSPVTAEVTYGLERLASYIQEVDSVYDIEWAPGVKYGEIFLQPEYEHSKYSFEISDQDMLLENFEKFEKEASRALEEGLVHPAYDYVLKCSHTFNLLDARGAVSVTERAGYIARIRNLARVVAKTFVAERKKLGFPLLDEATRAILLAEDDE.

It belongs to the class-II aminoacyl-tRNA synthetase family. In terms of assembly, tetramer of two alpha and two beta subunits.

Its subcellular location is the cytoplasm. The catalysed reaction is tRNA(Gly) + glycine + ATP = glycyl-tRNA(Gly) + AMP + diphosphate. The protein is Glycine--tRNA ligase alpha subunit of Streptococcus pyogenes serotype M2 (strain MGAS10270).